The sequence spans 239 residues: Suppressor of organelle fusion 1 (239 aa).

The protein belongs to the WD repeat WDR91 family. Interacts with sorf-2; the interaction is direct. Interacts with bec-1.

It localises to the early endosome. The protein localises to the late endosome. The protein resides in the cytoplasm. Its function is as follows. Together with sorf-2 negatively regulates the levels of phosphatidylinositol 3-phosphate (PtdIns3P) to enable the conversion of early endosomes to late endosomes. Binds to sorf-2 and the sorf-1-sorf-2 complex likely acts through bec-1, a non-catalytic subunit of phosphatidylinositol 3-kinase (PI3K), to suppress PI3K activity, thereby negatively regulating endosomal PtdIns3P levels. The polypeptide is Suppressor of organelle fusion 1 (Caenorhabditis elegans).